Reading from the N-terminus, the 602-residue chain is DNA mismatch repair protein MutL (602 aa).

The tract at residues 337-367 (KRPFPGSSTNYSGIQQDTKKQESDNPEKARG) is disordered. The span at 342–352 (GSSTNYSGIQQ) shows a compositional bias: polar residues. Residues 353–367 (DTKKQESDNPEKARG) are compositionally biased toward basic and acidic residues.

This sequence belongs to the DNA mismatch repair MutL/HexB family.

In terms of biological role, this protein is involved in the repair of mismatches in DNA. It is required for dam-dependent methyl-directed DNA mismatch repair. May act as a 'molecular matchmaker', a protein that promotes the formation of a stable complex between two or more DNA-binding proteins in an ATP-dependent manner without itself being part of a final effector complex. In Kosmotoga olearia (strain ATCC BAA-1733 / DSM 21960 / TBF 19.5.1), this protein is DNA mismatch repair protein MutL.